The following is a 241-amino-acid chain: Large ribosomal subunit protein bL25 (241 aa).

The tract at residues 214-241 (LDAVKAGEEGSRAQQETEEASERADQGQ) is disordered.

This sequence belongs to the bacterial ribosomal protein bL25 family. CTC subfamily. In terms of assembly, part of the 50S ribosomal subunit; part of the 5S rRNA/L5/L18/L25 subcomplex. Contacts the 5S rRNA. Binds to the 5S rRNA independently of L5 and L18.

This is one of the proteins that binds to the 5S RNA in the ribosome where it forms part of the central protuberance. In Deinococcus geothermalis (strain DSM 11300 / CIP 105573 / AG-3a), this protein is Large ribosomal subunit protein bL25.